Consider the following 443-residue polypeptide: Minovincinine 19-hydroxy-O-acetyltransferase (443 aa).

The Proton acceptor role is filled by His157. The short motif at Arg215–Pro222 is the Nuclear localization signal element. Positions Thr316–Arg343 form a coiled coil. The active-site Proton acceptor is the Asp384.

It belongs to the plant acyltransferase family. Monomer. As to expression, expressed in cortical cells of the root tip, especially in hairy roots, as well as in etiolated seedlings. Mostly expressed in roots, and, at lower levels, in leaves.

Its subcellular location is the cytoplasm. The protein localises to the nucleus. The enzyme catalyses (+)-minovincinine + acetyl-CoA = (+)-echitovenine + CoA. It functions in the pathway alkaloid biosynthesis. In terms of biological role, component of the monoterpenoid indole alkaloids (MIAs, e.g. echitovenine, tabersonine, lochnericine, 19-hydroxytabersonine and horhammericine) biosynthetic pathway; MIAs are used in cancer treatment and other medical applications. Acyltransferase catalyzing the conversion of (+)-minovincinine to (+)-echitovenine. In Catharanthus roseus (Madagascar periwinkle), this protein is Minovincinine 19-hydroxy-O-acetyltransferase.